Consider the following 588-residue polypeptide: Protein kintoun (588 aa).

3 disordered regions span residues 199–223, 338–498, and 510–535; these read PGYEAKEPPEERDLSPSTSHLPENS, PPLE…SSQE, and AANVNASDETSKRKPTEEQLEDADED. Residues 202-212 are compositionally biased toward basic and acidic residues; sequence EAKEPPEERDL. A compositionally biased stretch (polar residues) spans 350 to 361; that stretch reads PNPTSDPQNENQ. Basic and acidic residues-rich tracts occupy residues 362 to 382 and 393 to 433; these read TRVEERVEEMAEKGGEQHQRG and QVLE…KFEL. Residues 435 to 447 show a composition bias toward polar residues; it reads DVQQENKGNCSNT. Over residues 448–460 the composition is skewed to basic and acidic residues; it reads KEVKCCRRTKDSL.

This sequence belongs to the PIH1 family. Kintoun subfamily.

It localises to the cytoplasm. It is found in the dynein axonemal particle. In terms of biological role, required for cytoplasmic pre-assembly of axonemal dyneins, thereby playing a central role in motility in cilia and flagella. Involved in pre-assembly of dynein arm complexes in the cytoplasm before intraflagellar transport loads them for the ciliary compartment. This is Protein kintoun from Oryzias latipes (Japanese rice fish).